Here is a 445-residue protein sequence, read N- to C-terminus: Phosphoglucosamine mutase (445 aa).

Residue Ser102 is the Phosphoserine intermediate of the active site. Mg(2+) contacts are provided by Ser102, Asp241, Asp243, and Asp245. Ser102 bears the Phosphoserine mark.

This sequence belongs to the phosphohexose mutase family. Requires Mg(2+) as cofactor. Activated by phosphorylation.

The enzyme catalyses alpha-D-glucosamine 1-phosphate = D-glucosamine 6-phosphate. Its function is as follows. Catalyzes the conversion of glucosamine-6-phosphate to glucosamine-1-phosphate. In Acinetobacter baumannii (strain ACICU), this protein is Phosphoglucosamine mutase.